The sequence spans 324 residues: Zinc metalloproteinase leucurolysin-B (324 aa).

The 119-residue stretch at 1 to 119 folds into the Peptidase M12B domain; sequence DTVLLNRISH…LNPQCILNEP (119 aa). D11 serves as a coordination point for Ca(2+). Intrachain disulfides connect C34–C114, C74–C98, and C76–C81. H59 provides a ligand contact to Zn(2+). E60 is a catalytic residue. H63 and H69 together coordinate Zn(2+). Residue N97 is glycosylated (N-linked (GlcNAc...) asparagine). C114, N117, V129, N132, L134, E136, E139, and D142 together coordinate Ca(2+). A Disintegrin domain is found at 127–213; sequence PPVCGNELLE…QCPTDDFKRN (87 aa). Disulfide bonds link C130/C159, C141/C154, C143/C149, C153/C176, C167/C173, C172/C198, C185/C205, C192/C224, C217/C229, C236/C286, C251/C295, C264/C274, and C281/C315. The D/ECD-tripeptide motif lies at 191-193; it reads ECD. N-linked (GlcNAc...) asparagine glycosylation is found at N296 and N305.

This sequence belongs to the venom metalloproteinase (M12B) family. P-III subfamily. P-IIIa sub-subfamily. In terms of assembly, monomer. It depends on Zn(2+) as a cofactor. N-glycosylated. Post-translationally, the N-terminus is blocked. As to expression, expressed by the venom gland.

It localises to the secreted. Inhibited by EDTA, but not by PMSF. Pre-incubation with 2 mM DTT completely abolishes activity. Its function is as follows. Snake venom zinc metalloproteinase that acts as a potent hemorrhagic toxin. Hydrolyzes the insulin B chain at the 14-Ala-|-Leu-15 bond but not the 16-Tyr-|-Leu-17 bond. Degrades the alpha-chain of fibrin and hydrolyzes the Aalpha-chain of fibrinogen (FGA) while leaving the beta and gamma chains unaffected. Degrades type-I collagen and its gelatin. Degrades the alpha-1 chain of type-IV collagen and its gelatin but not the alpha-2 chain. Degrades plasma fibronectin, plasma vitronectin and basement membrane enactin. It inhibits collagen-induced platelet aggregation. The polypeptide is Zinc metalloproteinase leucurolysin-B (Bothrops leucurus (Whitetail lancehead)).